The chain runs to 88 residues: uncharacterized protein (88 aa).

3 helical membrane-spanning segments follow: residues 3-23, 33-53, and 61-81; these read VFIL…CSVA, VAPG…AFTA, and FIGG…PFFF.

It is found in the cell membrane. This is an uncharacterized protein from Bacillus subtilis (strain 168).